Reading from the N-terminus, the 364-residue chain is sn-glycerol-3-phosphate import ATP-binding protein UgpC (364 aa).

An ABC transporter domain is found at 4–235; sequence VVLRNVRKTY…PATTFVASFI (232 aa). 37 to 44 contacts ATP; it reads GPSGCGKS.

Belongs to the ABC transporter superfamily. sn-glycerol-3-phosphate importer (TC 3.A.1.1.3) family. As to quaternary structure, the complex is composed of two ATP-binding proteins (UgpC), two transmembrane proteins (UgpA and UgpE) and a solute-binding protein (UgpB).

It is found in the cell inner membrane. It carries out the reaction sn-glycerol 3-phosphate(out) + ATP + H2O = sn-glycerol 3-phosphate(in) + ADP + phosphate + H(+). In terms of biological role, part of the ABC transporter complex UgpBAEC involved in sn-glycerol-3-phosphate (G3P) import. Responsible for energy coupling to the transport system. This Rhodopseudomonas palustris (strain HaA2) protein is sn-glycerol-3-phosphate import ATP-binding protein UgpC.